The primary structure comprises 201 residues: Casparian strip membrane protein 7 (201 aa).

Positions 1–11 (MEAGEEIEDGE) are enriched in acidic residues. Positions 1–26 (MEAGEEIEDGEPSTPTYKAHHPPPHL) are disordered. Residues 1–34 (MEAGEEIEDGEPSTPTYKAHHPPPHLPPPMRSSG) lie on the Cytoplasmic side of the membrane. A helical transmembrane segment spans residues 35 to 55 (VSLVLSVADLVLRFVAIGGTA). Over 56–86 (GSAIAMATTSETLPFAAPFVRFRAEYSDLPT) the chain is Extracellular. A helical transmembrane segment spans residues 87–107 (LMFFVVASSVVCAYLVLSLPA). The Cytoplasmic portion of the chain corresponds to 108-128 (SVVHVVRPGARSSRAILAFLD). A helical transmembrane segment spans residues 129 to 149 (TVMLALLTASASAAAAIVYLA). The Extracellular portion of the chain corresponds to 150–171 (HRGSARANWLGICQQFTSFCQR). The helical transmembrane segment at 172-192 (ITASLVGSFAAAVVLVALVFL) threads the bilayer. The Cytoplasmic portion of the chain corresponds to 193 to 201 (SALSLARRA).

The protein belongs to the Casparian strip membrane proteins (CASP) family. In terms of assembly, homodimer and heterodimers.

The protein localises to the cell membrane. Its function is as follows. Regulates membrane-cell wall junctions and localized cell wall deposition. Required for establishment of the Casparian strip membrane domain (CSD) and the subsequent formation of Casparian strips, a cell wall modification of the root endodermis that determines an apoplastic barrier between the intraorganismal apoplasm and the extraorganismal apoplasm and prevents lateral diffusion. The sequence is that of Casparian strip membrane protein 7 from Oryza sativa subsp. japonica (Rice).